We begin with the raw amino-acid sequence, 329 residues long: Homeobox protein Nkx-3.2 (329 aa).

A disordered region spans residues Gly107–Pro188. Over residues Ser110–Pro124 the composition is skewed to gly residues. A compositionally biased stretch (basic and acidic residues) spans Glu138–Gly160. A DNA-binding region (homeobox) is located at residues Lys202–Gln261.

It belongs to the NK-3 homeobox family. First expressed in developing facial cartilage in early tailbud embryos, with expression localized to the basihyobranchial, palatoquadrate and possibly Meckel's cartilages. Shortly after, a second area of expression is seen in the musculature of the anterior gut. During late embryogenesis, gut expression extends into hindgut tissues. In adults, expressed at a high level in the kidney, pancreas, spleen and stomach and at a slightly lower level in the intestine, skeletal muscle and tongue. Adult heart, liver and lung show little or no expression.

The protein resides in the nucleus. The polypeptide is Homeobox protein Nkx-3.2 (nkx3-2) (Xenopus laevis (African clawed frog)).